Consider the following 448-residue polypeptide: Vitamin D3 receptor (448 aa).

Positions 41-116 (PRICGVCGDR…IGMMKEFILT (76 aa)) form a DNA-binding region, nuclear receptor. Zn(2+)-binding residues include Cys44, Cys47, Cys61, Cys64, Cys80, Cys86, Cys96, and Cys99. NR C4-type zinc fingers lie at residues 44–64 (CGVC…CEGC) and 80–104 (CPFS…LKRC). Residues 117–146 (DEEVQRKREMILKRKEEEALKESLKPKLSE) are hinge. The 298-residue stretch at 147 to 444 (EQQKVINILL…LTPLVLEVFG (298 aa)) folds into the NR LBD domain. Ser258 provides a ligand contact to calcitriol. The tract at residues 267–285 (KMIPGFRDLTAEDQIALLK) is interaction with coactivator LXXLL motif. Calcitriol contacts are provided by Arg295, Ser299, His326, and His418. The 9aaTAD motif lies at 437-445 (PLVLEVFGN).

This sequence belongs to the nuclear hormone receptor family. NR1 subfamily. In terms of assembly, homodimer in the absence of bound vitamin D3. Heterodimer with RXRA after vitamin D3 binding.

It localises to the nucleus. Its subcellular location is the cytoplasm. Its function is as follows. Nuclear receptor for calcitriol, the active form of vitamin D3 which mediates the action of this vitamin on cells. Enters the nucleus upon vitamin D3 binding where it forms heterodimers with the retinoid X receptor/RXR. The VDR-RXR heterodimers bind to specific response elements on DNA and activate the transcription of vitamin D3-responsive target genes. Plays a central role in calcium homeostasis. Also functions as a receptor for the secondary bile acid lithocholic acid (LCA) and its metabolites. This Coturnix japonica (Japanese quail) protein is Vitamin D3 receptor (VDR).